Consider the following 121-residue polypeptide: Ribulose bisphosphate carboxylase small subunit (121 aa).

This sequence belongs to the RuBisCO small chain family. As to quaternary structure, heterohexadecamer of 8 large and 8 small subunits.

In terms of biological role, ruBisCO catalyzes two reactions: the carboxylation of D-ribulose 1,5-bisphosphate, the primary event in carbon dioxide fixation, as well as the oxidative fragmentation of the pentose substrate. Both reactions occur simultaneously and in competition at the same active site. Although the small subunit is not catalytic it is essential for maximal activity. This Alvinoconcha hessleri symbiotic bacterium protein is Ribulose bisphosphate carboxylase small subunit.